We begin with the raw amino-acid sequence, 1191 residues long: WASH complex subunit homolog 5 (1191 aa).

The protein belongs to the strumpellin family. As to quaternary structure, component of the WASH complex.

It localises to the early endosome. Functionally, acts at least in part as component of the WASH complex which may regulate wash nucleation-promoting factor (NPF) activity and is required for its membrane targeting during endosomal sorting. During embryogenesis, not involved in the wash-dependent developmental migration of hemocytes anteriorly from the tail. In Drosophila melanogaster (Fruit fly), this protein is WASH complex subunit homolog 5.